A 169-amino-acid polypeptide reads, in one-letter code: Cell division inhibitor SulA (169 aa).

The tract at residues 106–112 (ALRTGNY) is ftsZ binding. Residues 162–169 (KIHSNLYH) form a lon protease binding region.

The protein belongs to the SulA family. As to quaternary structure, interacts with FtsZ. In terms of processing, is rapidly cleaved and degraded by the Lon protease once DNA damage is repaired.

Its function is as follows. Component of the SOS system and an inhibitor of cell division. Accumulation of SulA causes rapid cessation of cell division and the appearance of long, non-septate filaments. In the presence of GTP, binds a polymerization-competent form of FtsZ in a 1:1 ratio, thus inhibiting FtsZ polymerization and therefore preventing it from participating in the assembly of the Z ring. This mechanism prevents the premature segregation of damaged DNA to daughter cells during cell division. This is Cell division inhibitor SulA from Salmonella agona (strain SL483).